The chain runs to 211 residues: MIKLFVGLGNPGPEYEATRHNAGFWWIDALARELKVTLVPERSYHGLVARASVAGHSVWLLQPQTFMNLSGKSVAALARFFKIPPEEILVAHDELDIPPGQAKLKRGGSHAGHNGLRDIHAQLGTSDYWRLRIGIGHPGVKAEVVNWVLKKPAPDQRTLIEDSILHSLKAYPALLAGDMDKATLLVHTTKPPRPKATRPAQAQAAPQAGAD.

Residue Tyr-15 participates in tRNA binding. His-20 functions as the Proton acceptor in the catalytic mechanism. The tRNA site is built by Phe-66, Asn-68, and Asn-114. The segment at 189 to 211 is disordered; that stretch reads TKPPRPKATRPAQAQAAPQAGAD. Low complexity predominate over residues 197–211; the sequence is TRPAQAQAAPQAGAD.

Belongs to the PTH family. As to quaternary structure, monomer.

It localises to the cytoplasm. The enzyme catalyses an N-acyl-L-alpha-aminoacyl-tRNA + H2O = an N-acyl-L-amino acid + a tRNA + H(+). Functionally, hydrolyzes ribosome-free peptidyl-tRNAs (with 1 or more amino acids incorporated), which drop off the ribosome during protein synthesis, or as a result of ribosome stalling. In terms of biological role, catalyzes the release of premature peptidyl moieties from peptidyl-tRNA molecules trapped in stalled 50S ribosomal subunits, and thus maintains levels of free tRNAs and 50S ribosomes. This chain is Peptidyl-tRNA hydrolase, found in Acidovorax ebreus (strain TPSY) (Diaphorobacter sp. (strain TPSY)).